A 205-amino-acid chain; its full sequence is Holliday junction branch migration complex subunit RuvA (205 aa).

The tract at residues 1–64 is domain I; that stretch reads MIGRLRGIIL…EDAQLLFGFI (64 aa). Positions 65–143 are domain II; sequence HKQERVLFRE…GLSGDLFVPQ (79 aa). The tract at residues 144-156 is flexible linker; it reads GAGEIPAAIDAPA. Positions 157–205 are domain III; the sequence is MPADPEGEAVAALVALGYKPQEASRMVSKVASAGSDCEMLIRDALRAAL.

Belongs to the RuvA family. Homotetramer. Forms an RuvA(8)-RuvB(12)-Holliday junction (HJ) complex. HJ DNA is sandwiched between 2 RuvA tetramers; dsDNA enters through RuvA and exits via RuvB. An RuvB hexamer assembles on each DNA strand where it exits the tetramer. Each RuvB hexamer is contacted by two RuvA subunits (via domain III) on 2 adjacent RuvB subunits; this complex drives branch migration. In the full resolvosome a probable DNA-RuvA(4)-RuvB(12)-RuvC(2) complex forms which resolves the HJ.

It localises to the cytoplasm. In terms of biological role, the RuvA-RuvB-RuvC complex processes Holliday junction (HJ) DNA during genetic recombination and DNA repair, while the RuvA-RuvB complex plays an important role in the rescue of blocked DNA replication forks via replication fork reversal (RFR). RuvA specifically binds to HJ cruciform DNA, conferring on it an open structure. The RuvB hexamer acts as an ATP-dependent pump, pulling dsDNA into and through the RuvAB complex. HJ branch migration allows RuvC to scan DNA until it finds its consensus sequence, where it cleaves and resolves the cruciform DNA. The chain is Holliday junction branch migration complex subunit RuvA from Sodalis glossinidius (strain morsitans).